A 194-amino-acid chain; its full sequence is Superoxide dismutase [Cu-Zn] (194 aa).

A signal peptide spans 1–20 (MTRPLALIIFLVAILTNTDP). His-85 and His-104 together coordinate Cu cation. A disulfide bond links Cys-96 and Cys-188. Residues His-104, His-112, His-121, and Asp-124 each contribute to the Zn(2+) site. Residue His-162 coordinates Cu cation.

The protein belongs to the Cu-Zn superoxide dismutase family. As to quaternary structure, homodimer. It depends on Cu cation as a cofactor. Zn(2+) is required as a cofactor.

The catalysed reaction is 2 superoxide + 2 H(+) = H2O2 + O2. Functionally, destroys radicals which are normally produced within the cells and which are toxic to biological systems. The sequence is that of Superoxide dismutase [Cu-Zn] from Ramazzottius varieornatus (Water bear).